The primary structure comprises 294 residues: Protoheme IX farnesyltransferase (294 aa).

A run of 8 helical transmembrane segments spans residues proline 19–methionine 39, leucine 41–valine 61, valine 89–isoleucine 109, proline 111–tryptophan 131, leucine 138–alanine 158, alanine 166–isoleucine 186, valine 218–leucine 238, and serine 272–tryptophan 292.

This sequence belongs to the UbiA prenyltransferase family. Protoheme IX farnesyltransferase subfamily.

It is found in the cell membrane. It catalyses the reaction heme b + (2E,6E)-farnesyl diphosphate + H2O = Fe(II)-heme o + diphosphate. It functions in the pathway porphyrin-containing compound metabolism; heme O biosynthesis; heme O from protoheme: step 1/1. Converts heme B (protoheme IX) to heme O by substitution of the vinyl group on carbon 2 of heme B porphyrin ring with a hydroxyethyl farnesyl side group. This Korarchaeum cryptofilum (strain OPF8) protein is Protoheme IX farnesyltransferase.